The following is a 572-amino-acid chain: Frizzled-7 (572 aa).

The signal sequence occupies residues 1 to 32 (MRGPGTAASHSPLGLCALVLALLGALPTDTRA). Residues 33–254 (QPYHGEKGIS…EEERRFARLW (222 aa)) are Extracellular-facing. An FZ domain is found at 44-163 (PDHGFCQPIS…HGAGEICVGQ (120 aa)). Cystine bridges form between C49–C110, C57–C103, C94–C131, C120–C160, and C124–C148. A glycan (N-linked (GlcNAc...) asparagine) is linked at N63. A glycan (N-linked (GlcNAc...) asparagine) is linked at N164. Residues 255–275 (VGVWSVLCCASTLFTVLTYLV) traverse the membrane as a helical segment. The Cytoplasmic portion of the chain corresponds to 276–286 (DMRRFSYPERP). Residues 287–307 (IIFLSGCYFMVAVAHVAGFLL) form a helical membrane-spanning segment. Topologically, residues 308–334 (EDRAVCVERFSDDGYRTVAQGTKKEGC) are extracellular. Residues 335–355 (TILFMVLYFFGMASSIWWVIL) form a helical membrane-spanning segment. Residues 356-377 (SLTWFLAAGMKWGHEAIEANSQ) are Cytoplasmic-facing. Residues 378-398 (YFHLAAWAVPAVKTITILAMG) form a helical membrane-spanning segment. Topologically, residues 399–421 (QVDGDLLSGVCYVGLSSVDALRG) are extracellular. Residues 422 to 442 (FVLAPLFVYLFIGTSFLLAGF) traverse the membrane as a helical segment. At 443-468 (VSLFRIRTIMKHDGTKTEKLEKLMVR) the chain is on the cytoplasmic side. Residues 469-489 (IGVFSVLYTVPATIVLACYFY) form a helical membrane-spanning segment. The Extracellular segment spans residues 490-526 (EQAFREHWERTWLLQTCKSYAVPCPPGHFSPMSPDFT). A helical transmembrane segment spans residues 527–547 (VFMIKYLMTMIVGITTGFWIW). The Cytoplasmic portion of the chain corresponds to 548-572 (SGKTLQSWRRFYHRLSHSSKGETAV). The short motif at 550–555 (KTLQSW) is the Lys-Thr-X-X-X-Trp motif, mediates interaction with the PDZ domain of Dvl family members element. A PDZ-binding motif is present at residues 570–572 (TAV).

It belongs to the G-protein coupled receptor Fz/Smo family. As to quaternary structure, interacts with MAGI3. Interacts with DVL1. Interacts with CCDC88C/DAPLE; the interaction displaces DVL1 from FZD7, leading to inhibition of canonical Wnt signaling and triggering of non-canonical Wnt responses. Interacts with MYOC. Binds to SDCBP; this interaction is increased by inositol trisphosphate (IP3). Interacts with glypican GPC3. Post-translationally, ubiquitinated by ZNRF3, leading to its degradation by the proteasome.

It is found in the cell membrane. The protein localises to the endosome membrane. Functionally, receptor for Wnt proteins. Most frizzled receptors are coupled to the beta-catenin canonical signaling pathway, which leads to the activation of disheveled proteins, inhibition of GSK-3 kinase, nuclear accumulation of beta-catenin and activation of Wnt target genes. A second signaling pathway involving PKC and calcium fluxes has been seen for some family members, but it is not yet clear if it represents a distinct pathway or if it can be integrated in the canonical pathway, as PKC seems to be required for Wnt-mediated inactivation of GSK-3 kinase. Both pathways seem to involve interactions with G-proteins. Activation by WNT8 induces expression of beta-catenin target genes. Following ligand activation, binds to CCDC88C/DAPLE which displaces DVL1 from FZD7 and leads to inhibition of canonical Wnt signaling, activation of G-proteins by CCDC88C and triggering of non-canonical Wnt responses. May be involved in transduction and intercellular transmission of polarity information during tissue morphogenesis and/or in differentiated tissues. This is Frizzled-7 (Fzd7) from Mus musculus (Mouse).